An 82-amino-acid chain; its full sequence is Pigment-dispersing hormone peptides (82 aa).

The signal sequence occupies residues 1–26 (MIGKYLSWFMLAFLFGFVLESYRVQS). Alanine amide is present on Ala-80.

This sequence belongs to the arthropod PDH family. Expressed strongly in the head and weakly in the ventral nerve cord. Not detected in the midgut cecum or hindgut. In the cephalic neural complex, specifically localized to cells within the optic lobe, anteromedian protocerebrum, accessory lobe, tritocerebrum, and subesophageal ganglion.

It localises to the secreted. Functionally, the pigment-dispersing hormone causes the migration of the distal retinal pigment into the proximal end of the pigment chromatophore cells and thus decreases the amount of light entering the retinulas. May also function as a neurotransmitter and/or neuromodulator. The sequence is that of Pigment-dispersing hormone peptides from Armadillidium vulgare (Pillbug).